The sequence spans 462 residues: Integrator complex subunit 12 (462 aa).

The tract at residues 42-129 is disordered; the sequence is GIDSSYRPSQ…LEKPETQSSP (88 aa). A compositionally biased stretch (polar residues) spans 59–86; it reads ISSTKNISIKQEPKISSSLPSGNNNGKV. A Glycyl lysine isopeptide (Lys-Gly) (interchain with G-Cter in SUMO2) cross-link involves residue K68. Residues 88–124 show a composition bias toward basic and acidic residues; it reads TTEKVKKEAEKRPADKMKSDITEGVDIPKKPRLEKPE. S128 carries the post-translational modification Phosphoserine. The segment at 159–215 adopts a PHD-type zinc-finger fold; that stretch reads GLACVVCRQMMVASGNQLVECQECHNLYHRDCHKPQVTDKEANDPRLVWYCARCTRQ. Residue K254 forms a Glycyl lysine isopeptide (Lys-Gly) (interchain with G-Cter in SUMO2) linkage. Residues 301–328 are compositionally biased toward polar residues; it reads SSAGPSTAKLSSTTQNSTGKPATSSANQ. Residues 301 to 462 form a disordered region; it reads SSAGPSTAKL…KKAAQKKLKK (162 aa). Low complexity-rich tracts occupy residues 347 to 358 and 396 to 437; these read KIGSNNSTTPTV and GNSS…GPTS. Residues 449 to 462 are compositionally biased toward basic residues; it reads QMVKKKAAQKKLKK.

The protein belongs to the Integrator subunit 12 family. Component of the Integrator complex, composed of core subunits INTS1, INTS2, INTS3, INTS4, INTS5, INTS6, INTS7, INTS8, INTS9/RC74, INTS10, INTS11/CPSF3L, INTS12, INTS13, INTS14 and INTS15. The core complex associates with protein phosphatase 2A subunits PPP2CA and PPP2R1A, to form the Integrator-PP2A (INTAC) complex. Post-translationally, dephosphorylated at Ser-128 by the PNUTS-PP1 complex, promoting RNA polymerase II transcription pause-release.

It is found in the nucleus. Its function is as follows. Component of the integrator complex, a multiprotein complex that terminates RNA polymerase II (Pol II) transcription in the promoter-proximal region of genes. The integrator complex provides a quality checkpoint during transcription elongation by driving premature transcription termination of transcripts that are unfavorably configured for transcriptional elongation: the complex terminates transcription by (1) catalyzing dephosphorylation of the C-terminal domain (CTD) of Pol II subunit POLR2A/RPB1 and SUPT5H/SPT5, (2) degrading the exiting nascent RNA transcript via endonuclease activity and (3) promoting the release of Pol II from bound DNA. The integrator complex is also involved in terminating the synthesis of non-coding Pol II transcripts, such as enhancer RNAs (eRNAs), small nuclear RNAs (snRNAs), telomerase RNAs and long non-coding RNAs (lncRNAs). Mediates recruitment of cytoplasmic dynein to the nuclear envelope, probably as component of the integrator complex. This is Integrator complex subunit 12 (INTS12) from Macaca fascicularis (Crab-eating macaque).